The primary structure comprises 875 residues: Phosphatidylinositol 3-kinase VPS34 (875 aa).

The C2 PI3K-type domain maps to 14–188 (LDVPLKVKIK…WLDEITISKL (175 aa)). Positions 293–526 (LDKQVKPDIK…SSFWSRLDKK (234 aa)) constitute a PIK helical domain. Positions 593–859 (CPETSKVFKS…LINDSVNALL (267 aa)) constitute a PI3K/PI4K catalytic domain. The interval 599–605 (VFKSSLS) is G-loop. The segment at 728–736 (GVGDRHLDN) is catalytic loop. The tract at residues 747–768 (HADFGYILGQDPKPFPPLMKLP) is activation loop.

It belongs to the PI3/PI4-kinase family. Component of the autophagy-specific VPS34 PI3-kinase complex I composed of VPS15, VPS30, VPS34, ATG14 and ATG38, and of the VPS34 PI3-kinase complex II composed of VPS15, VPS30, VPS34 and VPS38. Interacts directly with ATG38. Interacts directly with VPS34. Post-translationally, autophosphorylated. Might also be phosphorylated by VPS15.

It is found in the golgi apparatus. It localises to the trans-Golgi network membrane. The protein localises to the endosome membrane. It catalyses the reaction a 1,2-diacyl-sn-glycero-3-phospho-(1D-myo-inositol) + ATP = a 1,2-diacyl-sn-glycero-3-phospho-(1D-myo-inositol-3-phosphate) + ADP + H(+). Its activity is regulated as follows. Phosphatidylinositol 3-kinase activity is directly dependent on VPS15 protein kinase activity. Functionally, phosphatidylinositol 3-kinase required for cytoplasm to vacuole transport (Cvt) and autophagy as a part of the autophagy-specific VPS34 PI3-kinase complex I. This complex is essential to recruit the ATG8-phosphatidylinositol conjugate and the ATG12-ATG5 conjugate to the pre-autophagosomal structure. Also involved in endosome-to-Golgi retrograde transport as part of the VPS34 PI3-kinase complex II. This second complex is required for the endosome-to-Golgi retrieval of PEP1 and KEX2, and the recruitment of VPS5 and VPS7, two components of the retromer complex, to endosomal membranes (probably through the synthesis of a specific pool of phosphatidylinositol 3-phosphate recruiting the retromer to the endosomes). Its activation by VPS15 may lead to the phosphorylation of phosphatidylinositol in the sorting compartment membrane. Finally, it might also be involved in ethanol tolerance and cell wall integrity. The sequence is that of Phosphatidylinositol 3-kinase VPS34 (VPS34) from Saccharomyces cerevisiae (strain ATCC 204508 / S288c) (Baker's yeast).